The sequence spans 466 residues: Soluble pyridine nucleotide transhydrogenase (466 aa).

36–45 contributes to the FAD binding site; that stretch reads EKESSVGGGC.

The protein belongs to the class-I pyridine nucleotide-disulfide oxidoreductase family. FAD is required as a cofactor.

The protein resides in the cytoplasm. The enzyme catalyses NAD(+) + NADPH = NADH + NADP(+). In terms of biological role, conversion of NADPH, generated by peripheral catabolic pathways, to NADH, which can enter the respiratory chain for energy generation. The protein is Soluble pyridine nucleotide transhydrogenase of Vibrio atlanticus (strain LGP32) (Vibrio splendidus (strain Mel32)).